Consider the following 7180-residue polypeptide: Replicase polyprotein 1ab (7180 aa).

A CoV Nsp1 globular domain is found at 54–196 (LVNHVRVDCS…PWSILLRKGG (143 aa)). Positions 217 to 247 (FNVEDACEEVHLNPRGKYSCKAYALLRGYRG) constitute a BetaCoV Nsp1 C-terminal domain. Residues 251-513 (ILFVDQYGCD…AICRFLYMDY (263 aa)) enclose the CoV Nsp2 N-terminal domain. The Zn(2+) site is built by Cys-390, Cys-395, Cys-411, and Cys-414. A C4 region spans residues 390–414 (CCGDTCGFRGWVPGNMMDGFPCPGC). The region spanning 518–706 (CGNLEQRAIL…VDKFKTFFKV (189 aa)) is the CoV Nsp2 middle domain. The region spanning 726-832 (SNRVCLAGSK…LDQCWRFPCA (107 aa)) is the CoV Nsp2 C-terminal domain. One can recognise a Ubiquitin-like 1 domain in the interval 834-946 (KKVVFNDKPK…MYCSFSAPDE (113 aa)). In terms of domain architecture, Peptidase C16 1 spans 1083–1320 (AFDAIYSETL…IAQLYGSCIT (238 aa)). Cys-1120 serves as the catalytic For PL1-PRO activity. The Zn(2+) site is built by Cys-1197, Cys-1200, Cys-1223, and Cys-1225. The C4-type 1 zinc finger occupies 1197–1225 (CLKCGMELKLQGLDAVFFYGDVVSHMCKC). Active-site for PL1-PRO activity residues include His-1271 and Asp-1282. One can recognise a Macro domain in the interval 1321–1481 (PNVCFVKGDV…VIEKCQVTSV (161 aa)). The 73-residue stretch at 1536 to 1608 (DDARVFVQAN…VSQIRALLAN (73 aa)) folds into the DPUP domain. The Ubiquitin-like 2 domain occupies 1607 to 1662 (ANKVDVLCTVDGVNFRSCCVAEGEVFGKTLGSVFCDGINVTKVRCSAIHKGKVFFQ). The Peptidase C16 2 domain maps to 1677-1936 (AFGFDEPQLL…CVAYKPDLSQ (260 aa)). Catalysis depends on Cys-1715, which acts as the For PL2-PRO activity. Zn(2+) contacts are provided by Cys-1793, Cys-1795, Cys-1827, and Cys-1829. The C4-type 2 zinc-finger motif lies at 1793 to 1829 (CKCGVKQEQRKGVDAVMHFGTLDKSGLVKGYNIACTC). Catalysis depends on for PL2-PRO activity residues His-1872 and Asp-1886. Positions 1950–2051 (IKAQFRTFEK…TYFNRPSVVC (102 aa)) constitute a Nucleic acid-binding domain. Residues 2106 to 2259 (SVEDQIVMEA…TDNKVIYTTE (154 aa)) enclose the G2M domain. 3 helical membrane passes run 2228-2248 (AIAC…WIKF), 2289-2309 (FFLV…NVIL), and 2320-2340 (LPMF…VLTI). The interval 2228-2465 (AIACYGAVKW…FTLLRFYIVV (238 aa)) is HD1. A 3Ecto domain is found at 2325–2386 (GQIVAWVKTT…SINVVQHVVD (62 aa)). 2 disulfide bridges follow: Cys-2341–Cys-2365 and Cys-2356–Cys-2362. Helical transmembrane passes span 2403–2423 (LVIG…LVGM) and 2445–2465 (LFVF…YIVV). A Y1 region spans residues 2473–2563 (CLCRHVMYGC…ELKRPVNPTD (91 aa)). The CoV Nsp3 Y domain maps to 2473 to 2840 (CLCRHVMYGC…LTTPFSLKGG (368 aa)). Residues His-2477, Cys-2482, Cys-2487, Cys-2490, Cys-2523, His-2526, Cys-2530, and Cys-2533 each coordinate Zn(2+). Residues 2477 to 2490 (HVMYGCSKPGCLFC) form a ZF1 region. A ZF2 region spans residues 2523–2533 (CTKHQWNCLNC). Residues 2564-2656 (SAYYSVIEVK…MVEKKLITTA (93 aa)) are Y2. The tract at residues 2564–2840 (SAYYSVIEVK…LTTPFSLKGG (277 aa)) is coV-Y. The segment at 2657–2739 (NTGLSVSRTM…KSVMAAVNAG (83 aa)) is Y3. A Y4 region spans residues 2740–2840 (VEVTDESCNN…LTTPFSLKGG (101 aa)). The next 6 membrane-spanning stretches (helical) occupy residues 2846-2866 (VLQW…ALMP), 3099-3119 (AFDL…FFAL), 3121-3141 (ASSV…YYLI), 3153-3173 (VVVI…VFQV), 3180-3200 (LYAC…SVVM), and 3205-3225 (LVMY…AVVV). An HD2 region spans residues 2846–3225 (VLQWLFVANL…FCITYVAVVV (380 aa)). One can recognise a Nsp4C domain in the interval 3239 to 3336 (IGTDVRSDGT…TASVTTSFLQ (98 aa)). The Peptidase C30 domain maps to 3337–3639 (SGIVKMVSPT…YQQLAGVKLQ (303 aa)). Active-site for 3CL-PRO activity residues include His-3377 and Cys-3481. The next 7 helical transmembrane spans lie at 3648 to 3668 (GTCC…SAFV), 3678 to 3698 (THML…MLLI), 3705 to 3725 (LTMY…LVVG), 3748 to 3768 (TYMD…FVTM), 3775 to 3795 (VFST…WYFG), 3802 to 3822 (VLLF…LSLA), and 3846 to 3866 (LVLL…GVLS). Positions 3648 to 3866 (GTCCWILAST…VCCCYWGVLS (219 aa)) are HD3. One can recognise a RdRp Nsp7 cofactor domain in the interval 3928-4016 (SRLTDVKCAN…DYVRDNTVLQ (89 aa)). The region spanning 4017–4213 (ALQSEFVNMA…HNEVSTVVLQ (197 aa)) is the RdRp Nsp8 cofactor domain. Residues 4214–4323 (NNELMPQKLR…GTLSSTVRLQ (110 aa)) enclose the Nsp9 ssRNA-binding domain. Residues 4324–4461 (AGTATEYASN…CVGTGSQFQS (138 aa)) enclose the ExoN/MTase coactivator domain. Positions 4397, 4400, 4406, 4413, 4439, 4442, 4450, and 4452 each coordinate Zn(2+). 2 zinc fingers span residues 4397 to 4413 (CIYC…DGLC) and 4439 to 4452 (CQVC…SCSC). Positions 4466 to 4721 (FLNRVRGTSV…DSELFVNGTY (256 aa)) constitute a NiRAN domain. Residues Asn-4669 and Asp-4678 each contribute to the Mn(2+) site. The region spanning 4722 to 4820 (REFDLVQYDF…MNMDVDTHRY (99 aa)) is the Nsp12 Interface domain. Zn(2+)-binding residues include His-4751, Cys-4757, Cys-4762, Cys-4766, and Cys-4943. One can recognise a Nsp12 RNA-dependent RNA polymerase domain in the interval 4821 to 5388 (RLSLKDLLLY…NMYLRSAVMQ (568 aa)). The interval 4823–5037 (SLKDLLLYAA…HQKCLKSIAA (215 aa)) is rdRp Fingers N-ter. A rdRp Palm N-ter region spans residues 5038–5076 (TRGVPVVIGTTKFYGGWDDMLRRLIKDVDSPVLMGWDYP). Residues 5068–5230 (PVLMGWDYPK…CYNSEFASKG (163 aa)) enclose the RdRp catalytic domain. Residues 5077-5135 (KCDRAMPNILRIVSSLVLARKHDSCCSHTDRFYRLANECAQVLGEIVMCGGCYYVKPGG) form a rdRp Fingers C-ter region. 3 residues coordinate Zn(2+): His-5098, Cys-5101, and Cys-5102. The interval 5136 to 5271 (TSSGDATTAF…EKGPHEFCSQ (136 aa)) is rdRp Palm C-ter. Active-site residues include Ser-5215, Asp-5216, and Asp-5217. The interval 5272-5388 (HTMLVKMDGD…NMYLRSAVMQ (117 aa)) is rdRp Thumb. Residues 5389-5501 (SVGACVVCSS…EDFNKIASCK (113 aa)) enclose the CV ZBD domain. Positions 5393, 5396, 5404, 5407, 5414, 5417, 5421, 5427, 5438, 5443, 5460, and 5463 each coordinate Zn(2+). Residues 5644–5825 (SVPETFQNNV…MCCLGPDIFL (182 aa)) form the (+)RNA virus helicase ATP-binding domain. 5669–5676 (GPPGTGKS) is a binding site for ATP. Positions 5826–6003 (GTCYRCPKEI…FKDCSKSYVG (178 aa)) constitute a (+)RNA virus helicase C-terminal domain. In terms of domain architecture, ExoN spans 6057–6272 (LFITRDEAIK…RCLAVHDCFC (216 aa)). Catalysis depends on residues Asp-6075, Glu-6077, and Glu-6176. The Zn(2+) site is built by Cys-6192, Cys-6195, Cys-6211, His-6214, His-6242, Cys-6246, and His-6249. Active-site residues include His-6253 and Asp-6258. Residue Cys-6264 participates in Zn(2+) binding. The region spanning 6281–6507 (YPIISNEVSV…NLWNTFTRLQ (227 aa)) is the N7-MTase domain. 6316 to 6322 (DIGNPKG) contributes to the S-adenosyl-L-methionine binding site. The gpppA-binding stretch occupies residues 6394 to 6408 (CNGGSLYVNKHAFHT). Residues Cys-6432, Cys-6453, Cys-6464, and His-6467 each coordinate Zn(2+). One can recognise a Nsp15 N-terminal oligomerization domain in the interval 6508–6568 (SLENVVYNLV…NVAVELFAER (61 aa)). The AV-Nsp11N/CoV-Nsp15M domain occupies 6569–6689 (SIRPHPELKL…FAMRRDGDDV (121 aa)). The NendoU domain maps to 6739–6878 (SPRSEMEKDF…NEEKVMTFYP (140 aa)). The region spanning 6883 to 7177 (AADWKPGYVM…KEVFVGDSLV (295 aa)) is the Nidovirus-type SAM-dependent 2'-O-MTase domain. Catalysis depends on residues Lys-6927, Asp-7011, Lys-7051, and Glu-7084.

The protein belongs to the coronaviruses polyprotein 1ab family. As to quaternary structure, interacts with host PHB and PHB2. Interacts with papain-like protease nsp3 and non-structural protein 6. In terms of assembly, monomer. Homodimer. Only the homodimer shows catalytic activity. As to quaternary structure, interacts with nsp8 and nsp12 to form the replication-transcription complex (RTC): nsp12, nsp7, two subunits of nsp8, and up to two subunits of nsp13. Interacts with nsp7, nsp13 and nsp12 to form the replication-transcription complex (RTC): nsp12, nsp7, two subunits of nsp8, and up to two subunits of nsp13. In terms of assembly, interacts with nsp12. As to quaternary structure, interacts with proofreading exoribonuclease nsp14 and 2'-O-methyltransferase nsp16; these interactions enhance nsp14 and nsp16 enzymatic activities. Interacts with nsp7 and nsp8 to form the replication-transcription complex (RTC): nsp12, nsp7, two subunits of nsp8, and up to two subunits of nsp13. Interacts with nsp9. In terms of assembly, interacts with nsp8 to form the replication-transcription complex (RTC): nsp12, nsp7, two subunits of nsp8, and up to two subunits of nsp13. Mn(2+) is required as a cofactor. Mg(2+) serves as cofactor. In terms of processing, specific enzymatic cleavages in vivo by its own proteases yield mature proteins. 3CL-PRO and PL-PRO proteinases are autocatalytically processed.

The protein resides in the host membrane. The protein localises to the host cytoplasm. It is found in the host perinuclear region. It localises to the host endoplasmic reticulum-Golgi intermediate compartment. The catalysed reaction is RNA(n) + a ribonucleoside 5'-triphosphate = RNA(n+1) + diphosphate. It catalyses the reaction ATP + H2O = ADP + phosphate + H(+). The enzyme catalyses Thiol-dependent hydrolysis of ester, thioester, amide, peptide and isopeptide bonds formed by the C-terminal Gly of ubiquitin (a 76-residue protein attached to proteins as an intracellular targeting signal).. It carries out the reaction a 5'-end (N(7)-methyl 5'-triphosphoguanosine)-ribonucleoside in mRNA + S-adenosyl-L-methionine = a 5'-end (N(7)-methyl 5'-triphosphoguanosine)-(2'-O-methyl-ribonucleoside) in mRNA + S-adenosyl-L-homocysteine + H(+). The catalysed reaction is uridylyl-uridylyl-ribonucleotide-RNA = a 3'-end uridylyl-2',3'-cyclophospho-uridine-RNA + a 5'-end dephospho-ribonucleoside-RNA. It catalyses the reaction a 5'-end diphospho-ribonucleoside in mRNA + GTP + H(+) = a 5'-end (5'-triphosphoguanosine)-ribonucleoside in mRNA + diphosphate. The enzyme catalyses a 5'-end (5'-triphosphoguanosine)-ribonucleoside in mRNA + S-adenosyl-L-methionine = a 5'-end (N(7)-methyl 5'-triphosphoguanosine)-ribonucleoside in mRNA + S-adenosyl-L-homocysteine. In terms of biological role, the replicase polyprotein of coronaviruses is a multifunctional protein: it contains the activities necessary for the transcription of negative stranded RNA, leader RNA, subgenomic mRNAs and progeny virion RNA as well as proteinases responsible for the cleavage of the polyprotein into functional products. Inhibits host translation by interacting with the 40S ribosomal subunit. The nsp1-40S ribosome complex further induces an endonucleolytic cleavage near the 5'UTR of host mRNAs, targeting them for degradation. Viral mRNAs are not susceptible to nsp1-mediated endonucleolytic RNA cleavage thanks to the presence of a 5'-end leader sequence and are therefore protected from degradation. By suppressing host gene expression, nsp1 facilitates efficient viral gene expression in infected cells and evasion from host immune response. Functionally, may play a role in the modulation of host cell survival signaling pathway by interacting with host PHB and PHB2. Indeed, these two proteins play a role in maintaining the functional integrity of the mitochondria and protecting cells from various stresses. Its function is as follows. Responsible for the cleavages located at the N-terminus of the replicase polyprotein. In addition, PL-PRO possesses a deubiquitinating/deISGylating activity and processes both 'Lys-48'- and 'Lys-63'-linked polyubiquitin chains from cellular substrates. Participates together with nsp4 in the assembly of virally-induced cytoplasmic double-membrane vesicles necessary for viral replication. Antagonizes innate immune induction of type I interferon by blocking the phosphorylation, dimerization and subsequent nuclear translocation of host IRF3. Also prevents host NF-kappa-B signaling. In terms of biological role, participates in the assembly of virally-induced cytoplasmic double-membrane vesicles necessary for viral replication. Cleaves the C-terminus of replicase polyprotein at 11 sites. Recognizes substrates containing the core sequence [ILMVF]-Q-|-[SGACN]. Also able to bind an ADP-ribose-1''-phosphate (ADRP). Functionally, plays a role in the initial induction of autophagosomes from host endoplasmic reticulum. Later, limits the expansion of these phagosomes that are no longer able to deliver viral components to lysosomes. Its function is as follows. Forms a hexadecamer with nsp8 (8 subunits of each) that may participate in viral replication by acting as a primase. Alternatively, may synthesize substantially longer products than oligonucleotide primers. In terms of biological role, forms a hexadecamer with nsp7 (8 subunits of each) that may participate in viral replication by acting as a primase. Alternatively, may synthesize substantially longer products than oligonucleotide primers. Forms a primer, NSP9-pU, which is utilized by the polymerase for the initiation of RNA chains. Interacts with ribosome signal recognition particle RNA (SRP). Together with NSP8, suppress protein integration into the cell membrane, thereby disrupting host immune defenses. Functionally, plays a pivotal role in viral transcription by stimulating both nsp14 3'-5' exoribonuclease and nsp16 2'-O-methyltransferase activities. Therefore plays an essential role in viral mRNAs cap methylation. Its function is as follows. RNA-directed RNA polymerase that catalyzes the transcription of viral genomic and subgenomic RNAs. Acts in complex with nsp7 and nsp8 to transcribe both the minus and positive strands of genomic RNA. The kinase-like NiRAN domain of NSP12 attaches one or more nucleotides to the amino terminus of NSP9, forming a covalent RNA-protein intermediate that serves as transcription/replication primer. Subgenomic RNAs (sgRNAs) are formed by discontinuous transcription: The polymerase has the ability to pause at transcription-regulating sequences (TRS) and jump to the leader TRS, resulting in a major deletion. This creates a series of subgenomic RNAs that are replicated, transcribed and translated. In addition, Nsp12 is a subunit of the viral RNA capping enzyme that catalyzes the RNA guanylyltransferase reaction for genomic and sub-genomic RNAs. Subsequently, the NiRAN domain transfers RNA to GDP, and forms the core cap structure GpppA-RNA. In terms of biological role, multi-functional protein with a zinc-binding domain in N-terminus displaying RNA and DNA duplex-unwinding activities with 5' to 3' polarity. Activity of helicase is dependent on magnesium. Plays a role in viral RNA synthesis through two distinct activities. The N7-guanine methyltransferase activity plays a role in the formation of the cap structure GpppA-RNA. The proofreading exoribonuclease reduces the sensitivity of the virus to RNA mutagens during replication. This activity acts on both ssRNA and dsRNA in a 3'-5' direction. Functionally, plays a role in viral transcription/replication and prevents the simultaneous activation of host cell dsRNA sensors, such as MDA5/IFIH1, OAS, and PKR. Acts by degrading the 5'-polyuridines generated during replication of the poly(A) region of viral genomic and subgenomic RNAs. Catalyzes a two-step reaction in which a 2'3'-cyclic phosphate (2'3'-cP) is first generated by 2'-O transesterification, which is then hydrolyzed to a 3'-phosphate (3'-P). If not degraded, poly(U) RNA would hybridize with poly(A) RNA tails and activate host dsRNA sensors. Its function is as follows. 2'-O-methyltransferase: Methyltransferase that mediates mRNA cap 2'-O-ribose methylation to the 5'-cap structure of viral mRNAs. N7-methyl guanosine cap is a prerequisite for binding of nsp16. Therefore plays an essential role in viral mRNAs cap methylation which is essential to evade immune system. The chain is Replicase polyprotein 1ab (rep) from Mus musculus (Mouse).